The following is a 210-amino-acid chain: Thymidylate kinase (210 aa).

9-16 lines the ATP pocket; that stretch reads GLEGAGKS.

This sequence belongs to the thymidylate kinase family.

It carries out the reaction dTMP + ATP = dTDP + ADP. Functionally, phosphorylation of dTMP to form dTDP in both de novo and salvage pathways of dTTP synthesis. This chain is Thymidylate kinase, found in Aliivibrio fischeri (strain ATCC 700601 / ES114) (Vibrio fischeri).